Reading from the N-terminus, the 620-residue chain is Proline--tRNA ligase (620 aa).

This sequence belongs to the class-II aminoacyl-tRNA synthetase family. ProS type 1 subfamily. As to quaternary structure, homodimer.

The protein resides in the cytoplasm. It catalyses the reaction tRNA(Pro) + L-proline + ATP = L-prolyl-tRNA(Pro) + AMP + diphosphate. Its function is as follows. Catalyzes the attachment of proline to tRNA(Pro) in a two-step reaction: proline is first activated by ATP to form Pro-AMP and then transferred to the acceptor end of tRNA(Pro). As ProRS can inadvertently accommodate and process non-cognate amino acids such as alanine and cysteine, to avoid such errors it has two additional distinct editing activities against alanine. One activity is designated as 'pretransfer' editing and involves the tRNA(Pro)-independent hydrolysis of activated Ala-AMP. The other activity is designated 'posttransfer' editing and involves deacylation of mischarged Ala-tRNA(Pro). The misacylated Cys-tRNA(Pro) is not edited by ProRS. The chain is Proline--tRNA ligase from Streptococcus suis (strain 98HAH33).